An 83-amino-acid polypeptide reads, in one-letter code: MDSADPQLNRFLQQLQAETQRQKFTEQVHTLTGRCWDVCFADYRPPSKMDGKTQTCIQNCVNRMIDASNFMVEHLSKMNGGHV.

A Twin CX3C motif motif is present at residues 35–60; the sequence is CWDVCFADYRPPSKMDGKTQTCIQNC. Intrachain disulfides connect cysteine 35/cysteine 60 and cysteine 39/cysteine 56.

It belongs to the small Tim family. Heterohexamer; composed of 3 copies of ddp-1/tim-8 and 3 copies of tin-13/tim-13, named soluble 70 kDa complex. Associates with the TIM22 complex, whose core is composed of tim-22.

Its subcellular location is the mitochondrion inner membrane. Functionally, mitochondrial intermembrane chaperone that participates in the import and insertion of some multi-pass transmembrane proteins into the mitochondrial inner membrane. Also required for the transfer of beta-barrel precursors from the TOM complex to the sorting and assembly machinery (SAM complex) of the outer membrane. Acts as a chaperone-like protein that protects the hydrophobic precursors from aggregation and guide them through the mitochondrial intermembrane space. The ddp-1/tim-8-tim-13 complex mediates the import of some proteins while the predominant tim-9/tin-9.1-tim-10/tin-10 70 kDa complex mediates the import of much more proteins. The sequence is that of Mitochondrial import inner membrane translocase subunit Tim8 from Caenorhabditis elegans.